Consider the following 963-residue polypeptide: Protein bicaudal C homolog 1-A (963 aa).

A disordered region spans residues 1 to 48 (MAAQCESIGGDMNQSDPGSNSERSADSPVPGSEDDSPHDPEWREERFR). Positions 12 to 22 (MNQSDPGSNSE) are enriched in polar residues. The segment covering 35 to 48 (DSPHDPEWREERFR) has biased composition (basic and acidic residues). KH domains lie at 128–195 (RVTL…RVRI) and 280–344 (PVST…RQYL). A compositionally biased stretch (polar residues) spans 592–601 (EASRQSNNHS). Disordered regions lie at residues 592–613 (EASRQSNNHSSAEEVNSKTDPE), 668–713 (ERLL…TSQS), and 767–834 (LRRA…NKSA). Basic and acidic residues-rich tracts occupy residues 602-612 (SAEEVNSKTDP) and 683-696 (VTDKKAPGSERAAE). Residues 784–797 (ENSSLSRSNSREQL) are compositionally biased toward low complexity. Positions 812 to 824 (IDSSQNDYSSSIG) are enriched in polar residues. The SAM domain maps to 862–925 (FKGSDLPELF…LLAISELNKN (64 aa)).

The protein belongs to the BicC family.

In terms of biological role, putative RNA-binding protein. May be involved in regulating gene expression during embryonic development. Seems to be involved in endoderm formation. Ectopic expression results in endoderm formation in the absence of mesoderm induction. In Xenopus laevis (African clawed frog), this protein is Protein bicaudal C homolog 1-A (bicc1-a).